The chain runs to 418 residues: Tyrosine--tRNA ligase (418 aa).

Positions 42–51 (PTSPDLHLGH) match the 'HIGH' region motif. The 'KMSKS' region signature appears at 226–230 (KMSKS). Lys-229 contributes to the ATP binding site. In terms of domain architecture, S4 RNA-binding spans 339–400 (VRLVALLTKS…GKRNFIKVRL (62 aa)).

It belongs to the class-I aminoacyl-tRNA synthetase family. TyrS type 2 subfamily. As to quaternary structure, homodimer.

The protein localises to the cytoplasm. The enzyme catalyses tRNA(Tyr) + L-tyrosine + ATP = L-tyrosyl-tRNA(Tyr) + AMP + diphosphate + H(+). Functionally, catalyzes the attachment of tyrosine to tRNA(Tyr) in a two-step reaction: tyrosine is first activated by ATP to form Tyr-AMP and then transferred to the acceptor end of tRNA(Tyr). The protein is Tyrosine--tRNA ligase of Xylella fastidiosa (strain Temecula1 / ATCC 700964).